Consider the following 222-residue polypeptide: Physcion biosynthesis cluster O-methyltransferase (222 aa).

The protein belongs to the methyltransferase superfamily.

It catalyses the reaction emodin + S-adenosyl-L-methionine = physcion + S-adenosyl-L-homocysteine. Its pathway is secondary metabolite biosynthesis. In terms of biological role, O-methyltransferase; part of the gene cluster that mediates the biosynthesis of physcion, a natural anthraquinone fungicide that can prevent plant fungal infections. Within the pathway, the O-methyltransferase AcOMT catalyzes the last step by transferring a methyl group to C-6 hydroxyl of emodin to form physcion. AcOMT may also methylate the C-6 hydroxyl group of emodin anthrone to produce physcion-anthrone B. The pathway begins with the polyketide synthase AcPKS that condenses 8 malonyl-CoA units to synthesize atrochrysone thioester which is released from the synthase by the atrochrysone carboxyl ACP thioesterase AcTE that breaks the thioester bond and leads to free atrochrysone carboxylic acid. Spontaneous decarboxylation of atrochrysone carboxylic acid leads to the formation of atrochrysone. Then, atrochrysone undergoes spontaneous dehydration and oxidation, giving the products emodin anthrone and emodin. The O-methyltransferase AcOMT then methylates the C-6 hydroxyl of emodin to form physcion. The protein is Physcion biosynthesis cluster O-methyltransferase of Aspergillus chevalieri (Eurotium chevalieri).